A 380-amino-acid chain; its full sequence is Acyl-coenzyme A diphosphatase SCS3 (380 aa).

At 1–7 (MSSKWFN) the chain is on the cytoplasmic side. The helical transmembrane segment at 8–28 (AIHLLVCPLTVLVGYLMNAYG) threads the bilayer. Residues 29-43 (YGAALQATLNKDGLV) lie on the Lumenal side of the membrane. A helical membrane pass occupies residues 44-64 (NAMLVKKGWFWTSLVGWWCII). Residues 65 to 88 (RYRAVPGATGRDRRHIVQSFKRYA) lie on the Cytoplasmic side of the membrane. Residues 89 to 109 (ILTVWWYVFTQGIWFGVGPIM) form a helical membrane-spanning segment. Topologically, residues 110–233 (DLVFVYTGGH…GHWAGGHDPS (124 aa)) are lumenal. Residues 234-254 (GHVFLATLMCMFLLGELRVFG) traverse the membrane as a helical segment. The active site involves His-235. Residues 255-325 (RRALAHLYAQ…LTRCIACDHP (71 aa)) lie on the Cytoplasmic side of the membrane. Residues 326–346 (VIILLTLLVTWLWQLLLTAVA) traverse the membrane as a helical segment. At 347–356 (SRFHTVREHM) the chain is on the lumenal side. The active site involves His-350. The chain crosses the membrane as a helical span at residues 357-377 (SGLLAAYIVTGLVYARDAAAL). Residues 378 to 380 (RPV) lie on the Cytoplasmic side of the membrane.

The protein belongs to the FIT family. Fungal FIT2B/SCS3 subfamily.

It localises to the endoplasmic reticulum membrane. The enzyme catalyses an acyl-CoA + H2O = an acyl-4'-phosphopantetheine + adenosine 3',5'-bisphosphate + 2 H(+). The catalysed reaction is (9Z)-octadecenoyl-CoA + H2O = S-(9Z-octadecenoyl)-4'-phosphopantetheine + adenosine 3',5'-bisphosphate + 2 H(+). It catalyses the reaction (5Z,8Z,11Z,14Z)-eicosatetraenoyl-CoA + H2O = S-(5Z,8Z,11Z,14Z-eicosatetraenoyl)-4'-phosphopantetheine + adenosine 3',5'-bisphosphate + 2 H(+). It carries out the reaction hexadecanoyl-CoA + H2O = S-hexadecanoyl-4'-phosphopantetheine + adenosine 3',5'-bisphosphate + 2 H(+). Its function is as follows. Fatty acyl-coenzyme A (CoA) diphosphatase that hydrolyzes fatty acyl-CoA to yield acyl-4'-phosphopantetheine and adenosine 3',5'-bisphosphate. Preferentially hydrolyzes unsaturated long-chain acyl-CoA substrates in the endoplasmic reticulum (ER) lumen. This catalytic activity is required for maintaining ER structure and for lipid droplets (LDs) biogenesis, which are lipid storage organelles involved in maintaining lipid and energy homeostasis. May directly bind to diacylglycerol (DAGs) and triacylglycerol, which is also important for LD biogenesis. May support directional budding of nacent LDs from the ER into the cytosol by reducing DAG levels at sites of LD formation. May play a role in the regulation of cell morphology and cytoskeletal organization. Involved in phospholipid biosynthesis. In Saccharomyces cerevisiae (strain ATCC 204508 / S288c) (Baker's yeast), this protein is Acyl-coenzyme A diphosphatase SCS3.